We begin with the raw amino-acid sequence, 302 residues long: Uroporphyrinogen-III synthase, chloroplastic (302 aa).

Residues 1–39 are disordered; the sequence is MALSSSSHLLPFSRPPATFPRARHAGGGRGRAGATGRFI. The N-terminal 50 residues, 1–50, are a transit peptide targeting the chloroplast; that stretch reads MALSSSSHLLPFSRPPATFPRARHAGGGRGRAGATGRFIACSSPPPPDVV.

It belongs to the uroporphyrinogen-III synthase family.

Its subcellular location is the plastid. It localises to the chloroplast. It carries out the reaction hydroxymethylbilane = uroporphyrinogen III + H2O. The protein operates within porphyrin-containing compound metabolism; protoporphyrin-IX biosynthesis; coproporphyrinogen-III from 5-aminolevulinate: step 3/4. Catalyzes cyclization of the linear tetrapyrrole, hydroxymethylbilane, to the macrocyclic uroporphyrinogen III, a precursor of tetrapyrroles such as chlorophyll, heme and phycobilins. The sequence is that of Uroporphyrinogen-III synthase, chloroplastic (UROS) from Oryza sativa subsp. japonica (Rice).